Reading from the N-terminus, the 676-residue chain is DNA ligase (676 aa).

NAD(+) is bound by residues 34–38, 84–85, and Glu-116; these read DAEYD and SL. Lys-118 functions as the N6-AMP-lysine intermediate in the catalytic mechanism. NAD(+)-binding residues include Arg-139, Glu-174, Lys-294, and Lys-318. Zn(2+)-binding residues include Cys-412, Cys-415, Cys-428, and Cys-433. The region spanning 589–676 is the BRCT domain; sequence KGGEALKGLT…RTGKKAEELV (88 aa).

It belongs to the NAD-dependent DNA ligase family. LigA subfamily. Mg(2+) is required as a cofactor. It depends on Mn(2+) as a cofactor.

It catalyses the reaction NAD(+) + (deoxyribonucleotide)n-3'-hydroxyl + 5'-phospho-(deoxyribonucleotide)m = (deoxyribonucleotide)n+m + AMP + beta-nicotinamide D-nucleotide.. In terms of biological role, DNA ligase that catalyzes the formation of phosphodiester linkages between 5'-phosphoryl and 3'-hydroxyl groups in double-stranded DNA using NAD as a coenzyme and as the energy source for the reaction. It is essential for DNA replication and repair of damaged DNA. This chain is DNA ligase, found in Thermus thermophilus (strain ATCC BAA-163 / DSM 7039 / HB27).